Consider the following 119-residue polypeptide: Large ribosomal subunit protein bL20 (119 aa).

This sequence belongs to the bacterial ribosomal protein bL20 family.

Its function is as follows. Binds directly to 23S ribosomal RNA and is necessary for the in vitro assembly process of the 50S ribosomal subunit. It is not involved in the protein synthesizing functions of that subunit. This is Large ribosomal subunit protein bL20 from Mycoplasma capricolum subsp. capricolum (strain California kid / ATCC 27343 / NCTC 10154).